The sequence spans 248 residues: Methionine aminopeptidase 1 (248 aa).

H77 contributes to the substrate binding site. D94, D105, and H168 together coordinate a divalent metal cation. H175 contacts substrate. A divalent metal cation-binding residues include E201 and E232.

In terms of assembly, monomer. The cofactor is Co(2+). Requires Zn(2+) as cofactor. It depends on Mn(2+) as a cofactor. Fe(2+) is required as a cofactor.

It is found in the cytoplasm. It catalyses the reaction Release of N-terminal amino acids, preferentially methionine, from peptides and arylamides.. Its function is as follows. Removes the N-terminal methionine from nascent proteins. The N-terminal methionine is often cleaved when the second residue in the primary sequence is small and uncharged (Met-Ala-, Cys, Gly, Pro, Ser, Thr, or Val). Requires deformylation of the N(alpha)-formylated initiator methionine before it can be hydrolyzed. The polypeptide is Methionine aminopeptidase 1 (Bacillus subtilis (strain 168)).